The primary structure comprises 1523 residues: Dicer-like protein 1 (1523 aa).

Residues 24–38 show a composition bias toward polar residues; that stretch reads LNLSGERTISTTEPT. The segment at 24-58 is disordered; that stretch reads LNLSGERTISTTEPTEGNDSSSEESGDNEQISTQR. The 182-residue stretch at 123–304 folds into the Helicase ATP-binding domain; it reads LFERAKSQNT…ESATKLEVLL (182 aa). 136-143 is a binding site for ATP; that stretch reads LDTGSGKT. A DEAH box motif is present at residues 249–252; that stretch reads DEAH. Residues 444 to 617 form the Helicase C-terminal domain; sequence LLRQKLIKYF…GIDSEIDSIL (174 aa). The region spanning 640–730 is the Dicer dsRNA-binding fold domain; sequence ALAILARYAS…NSVYHRRLPA (91 aa). Positions 879-1007 constitute a PAZ domain; sequence ELLHLVHENE…VCIEPLRISA (129 aa). RNase III domains follow at residues 1031 to 1190 and 1241 to 1392; these read IALE…LSGG and GRKV…VDSD. Positions 1281, 1378, and 1381 each coordinate Mg(2+). The region spanning 1426-1494 is the DRBM domain; sequence TFLQNRLTNE…SEKALSVLEN (69 aa). C1438, H1465, C1506, and C1508 together coordinate Zn(2+).

This sequence belongs to the helicase family. Dicer subfamily. The cofactor is Mg(2+). Mn(2+) is required as a cofactor.

Dicer-like endonuclease involved in cleaving double-stranded RNA in the RNA interference (RNAi) pathway. Produces 21 to 25 bp dsRNAs (siRNAs) which target the selective destruction of homologous RNAs leading to sequence-specific suppression of gene expression, called post-transcriptional gene silencing (PTGS). Part of a broad host defense response against viral infection and transposons. The sequence is that of Dicer-like protein 1 (dcl1) from Aspergillus oryzae (strain ATCC 42149 / RIB 40) (Yellow koji mold).